The primary structure comprises 179 residues: Large ribosomal subunit protein uL5 (179 aa).

It belongs to the universal ribosomal protein uL5 family. In terms of assembly, part of the 50S ribosomal subunit; part of the 5S rRNA/L5/L18/L25 subcomplex. Contacts the 5S rRNA and the P site tRNA. Forms a bridge to the 30S subunit in the 70S ribosome.

Its function is as follows. This is one of the proteins that bind and probably mediate the attachment of the 5S RNA into the large ribosomal subunit, where it forms part of the central protuberance. In the 70S ribosome it contacts protein S13 of the 30S subunit (bridge B1b), connecting the 2 subunits; this bridge is implicated in subunit movement. Contacts the P site tRNA; the 5S rRNA and some of its associated proteins might help stabilize positioning of ribosome-bound tRNAs. This Yersinia enterocolitica serotype O:8 / biotype 1B (strain NCTC 13174 / 8081) protein is Large ribosomal subunit protein uL5.